A 91-amino-acid chain; its full sequence is Lipolysis-activating peptide 1-alpha chain (91 aa).

Positions 1-21 (MNIKLFCFLSILISLTGLSLS) are cleaved as a signal peptide. The LCN-type CS-alpha/beta domain occupies 23-87 (DDGNYPIDAN…FFDAYKTYCK (65 aa)). Intrachain disulfides connect Cys38–Cys61, Cys47–Cys66, and Cys51–Cys68.

The protein belongs to the long (3 C-C) scorpion toxin superfamily. As to quaternary structure, heterodimer of this alpha chain and a beta chain (AC D9U2A2). In terms of tissue distribution, expressed by the venom gland.

It localises to the secreted. The heterodimer LVP1 induces lipolysis in rat adipocytes. Induction of lipolysis by LVP1 appears to be mediated through the beta-2 adrenergic receptor pathway (ADRB2). The protein is Lipolysis-activating peptide 1-alpha chain of Lychas mucronatus (Chinese swimming scorpion).